The sequence spans 474 residues: 3-isopropylmalate dehydratase large subunit (474 aa).

[4Fe-4S] cluster contacts are provided by Cys355, Cys415, and Cys418.

This sequence belongs to the aconitase/IPM isomerase family. LeuC type 1 subfamily. As to quaternary structure, heterodimer of LeuC and LeuD. Requires [4Fe-4S] cluster as cofactor.

It catalyses the reaction (2R,3S)-3-isopropylmalate = (2S)-2-isopropylmalate. Its pathway is amino-acid biosynthesis; L-leucine biosynthesis; L-leucine from 3-methyl-2-oxobutanoate: step 2/4. Functionally, catalyzes the isomerization between 2-isopropylmalate and 3-isopropylmalate, via the formation of 2-isopropylmaleate. In Shewanella sp. (strain MR-7), this protein is 3-isopropylmalate dehydratase large subunit.